A 402-amino-acid polypeptide reads, in one-letter code: Propionate kinase (402 aa).

ATP-binding residues include Asn-11 and Lys-18. Mg(2+) is bound at residue Asn-11. Arg-86 is a binding site for substrate. The Proton donor/acceptor role is filled by Asp-143. ATP-binding positions include His-175, 203–207, 278–280, and 326–330; these read HLGNG, DLR, and GIGEN.

Belongs to the acetokinase family. TdcD subfamily. In terms of assembly, homodimer. Mg(2+) serves as cofactor.

The enzyme catalyses propanoate + ATP = propanoyl phosphate + ADP. The protein operates within amino-acid degradation; L-threonine degradation via propanoate pathway; propanoate from L-threonine: step 4/4. Catalyzes the conversion of propionyl phosphate and ADP to propionate and ATP. This chain is Propionate kinase, found in Citrobacter koseri (strain ATCC BAA-895 / CDC 4225-83 / SGSC4696).